The chain runs to 809 residues: MAATELRGVVGPGPAAIAAPGGGGAGPPVVGGGGGGRGDAGPGSGAASGTVAAAAAGGQGPGAGGVAAAAGPAPTPPAGGSGSSGTGGSGSAREGWLFKWTNYIKGYQRRWFVLSNGLLSYYRSKAEMRHTCRGTINLATANITVEDSCNFIISNGGAQTYHLKASSEVERQRWVTALELAKAKAVKMLAESDESGDEESVSQTDKTELQNTLRTLSSKVEDLSTCNDLIAKHGTALQRSLSELESLKLPAESNEKIKQVNERATLFRITSNAMINACRDFLVLAQTHSKKWQKSLQYERDQRIRLEETLEQLAKQHNHLERAFRGATVLPAHTSGSAGSGKDQCCSGKGDMSDEDDENEFFDAPEIITMPENLGHKRTGSNISGASSDISLDEQYKHQLEETKKEKRTRIPYKPNYSLNLWSIMKNCIGKELSKIPMPVNFNEPLSMLQRLTEDLEYHELLDRAAKCENSLEQLCYVAAFTVSSYSTTVFRTSKPFNPLLGETFELDRLEENGYRSLCEQVSHHPPAAAHHAESKNGWTLRQEIKITSKFRGKYLSIMPLGTIHCIFHATGHHYTWKKVTTTVHNIIVGKLWIDQSGEIDIVNHKTGDKCNLKFVPYSYFSRDVARKVTGEVTDPSGKVHFALLGTWDEKMDCFKVQPVSGENGGDARQRGHEAEESRVMLWKRNPLPKNAENMYYFSELALTLNAWEGGTAPTDSRLRPDQRLMENGRWDEANAEKQRLEEKQRLSRKKREAEAMKATEDGTPYDPYKALWFERKKDPVTKELTHIYRGEYWECKEKQDWNSCPDIF.

A2 carries the N-acetylalanine modification. 2 disordered regions span residues 17 to 49 and 63 to 91; these read IAAP…AASG and AGGV…GSGS. 2 stretches are compositionally biased toward gly residues: residues 20–46 and 79–90; these read PGGG…GSGA and GGSGSSGTGGSG. One can recognise a PH domain in the interval 90 to 183; it reads GSAREGWLFK…WVTALELAKA (94 aa). An a 1,2-diacyl-sn-glycero-3-phospho-(1D-myo-inositol 4-phosphate)-binding site is contributed by 119–124; sequence LSYYRS. 5 positions are modified to phosphoserine: S192, S195, S200, S240, and S242. The stretch at 293–328 forms a coiled coil; it reads QKSLQYERDQRIRLEETLEQLAKQHNHLERAFRGAT. Q316 is a binding site for 20-hydroxycholesterol. Position 316 (Q316) interacts with 25-hydroxycholesterol. Residue Q316 coordinates 7beta-hydroxycholesterol. Residue Q316 participates in cholesterol binding. Q316 contacts ergosterol. A disordered region spans residues 332 to 355; the sequence is AHTSGSAGSGKDQCCSGKGDMSDE. 3 positions are modified to phosphoserine: S340, S347, and S353. The short motif at 360–366 is the FFAT element; sequence EFFDAPE. T379 carries the post-translational modification Phosphothreonine. Residues S381, S384, S387, S388, and S391 each carry the phosphoserine modification. Residues 495 to 498 and 524 to 525 each bind a 1,2-diacyl-sn-glycero-3-phospho-(1D-myo-inositol 4-phosphate); these read KPFN and HH. The interval 729-761 is disordered; the sequence is GRWDEANAEKQRLEEKQRLSRKKREAEAMKATE. Residues 732–762 adopt a coiled-coil conformation; sequence DEANAEKQRLEEKQRLSRKKREAEAMKATED.

It belongs to the OSBP family. Homodimer or homotrimer. Interacts (via FFAT motif) with VAPA. Interacts (via C-terminus) with RELCH (via the third HEAT repeat). Found in a complex composed of RELCH, OSBP1 and RAB11A. Post-translationally, the N-terminus is blocked.

Its subcellular location is the cytoplasm. It localises to the cytosol. The protein localises to the perinuclear region. It is found in the golgi apparatus membrane. The protein resides in the endoplasmic reticulum membrane. Its function is as follows. Lipid transporter involved in lipid countertransport between the Golgi complex and membranes of the endoplasmic reticulum: specifically exchanges sterol with phosphatidylinositol 4-phosphate (PI4P), delivering sterol to the Golgi in exchange for PI4P, which is degraded by the SAC1/SACM1L phosphatase in the endoplasmic reticulum. Binds cholesterol and a range of oxysterols including 25-hydroxycholesterol. Cholesterol binding promotes the formation of a complex with PP2A and a tyrosine phosphatase which dephosphorylates ERK1/2, whereas 25-hydroxycholesterol causes its disassembly. Regulates cholesterol efflux by decreasing ABCA1 stability. This chain is Oxysterol-binding protein 1 (OSBP), found in Oryctolagus cuniculus (Rabbit).